We begin with the raw amino-acid sequence, 518 residues long: Sensor protein kinase HptS (518 aa).

Helical transmembrane passes span 20–40 and 222–242; these read IFPVFLVIIIGLVSFYAIYIW and GITLLIVMAVVLVLLVIFGFI. In terms of domain architecture, Histidine kinase spans 297 to 513; that stretch reads EQLIHSIEHT…LICYKIPLSR (217 aa). The residue at position 325 (histidine 325) is a Phosphohistidine; by autocatalysis.

In terms of processing, autophosphorylated.

The protein localises to the cell membrane. The enzyme catalyses ATP + protein L-histidine = ADP + protein N-phospho-L-histidine.. Functionally, member of the two-component regulatory system HptS/HptR that regulates genes involved in hexose phosphate transport system in response to changes in extracellular phosphate sources. May act as a sensor protein kinase which is autophosphorylated at a histidine residue and transfers its phosphate group to the conserved aspartic acid residue in the regulatory domain of HptS. In turn, HptS antagonizes CcpA-dependent transcription of a subset of CcpA-regulated genes involved in antibiotic susceptibility. This chain is Sensor protein kinase HptS (hptS), found in Staphylococcus aureus (strain bovine RF122 / ET3-1).